The primary structure comprises 306 residues: Formamidopyrimidine-DNA glycosylase (306 aa).

Pro2 (schiff-base intermediate with DNA) is an active-site residue. Catalysis depends on Glu3, which acts as the Proton donor. Residue Lys58 is the Proton donor; for beta-elimination activity of the active site. DNA is bound by residues His114, Arg136, and Lys179. An FPG-type zinc finger spans residues 270–306 (SVYDREGEACRTSGCRGTVERIVQAGRSTFYCPHCQK). Arg296 functions as the Proton donor; for delta-elimination activity in the catalytic mechanism.

It belongs to the FPG family. As to quaternary structure, monomer. Requires Zn(2+) as cofactor.

The catalysed reaction is Hydrolysis of DNA containing ring-opened 7-methylguanine residues, releasing 2,6-diamino-4-hydroxy-5-(N-methyl)formamidopyrimidine.. The enzyme catalyses 2'-deoxyribonucleotide-(2'-deoxyribose 5'-phosphate)-2'-deoxyribonucleotide-DNA = a 3'-end 2'-deoxyribonucleotide-(2,3-dehydro-2,3-deoxyribose 5'-phosphate)-DNA + a 5'-end 5'-phospho-2'-deoxyribonucleoside-DNA + H(+). Involved in base excision repair of DNA damaged by oxidation or by mutagenic agents. Acts as a DNA glycosylase that recognizes and removes damaged bases. Has a preference for oxidized purines, such as 7,8-dihydro-8-oxoguanine (8-oxoG). Has AP (apurinic/apyrimidinic) lyase activity and introduces nicks in the DNA strand. Cleaves the DNA backbone by beta-delta elimination to generate a single-strand break at the site of the removed base with both 3'- and 5'-phosphates. This chain is Formamidopyrimidine-DNA glycosylase, found in Sinorhizobium medicae (strain WSM419) (Ensifer medicae).